We begin with the raw amino-acid sequence, 474 residues long: Glutamyl-tRNA(Gln) amidotransferase subunit A (474 aa).

Catalysis depends on charge relay system residues lysine 76 and serine 151. Serine 175 acts as the Acyl-ester intermediate in catalysis.

The protein belongs to the amidase family. GatA subfamily. Heterotrimer of A, B and C subunits.

It catalyses the reaction L-glutamyl-tRNA(Gln) + L-glutamine + ATP + H2O = L-glutaminyl-tRNA(Gln) + L-glutamate + ADP + phosphate + H(+). In terms of biological role, allows the formation of correctly charged Gln-tRNA(Gln) through the transamidation of misacylated Glu-tRNA(Gln) in organisms which lack glutaminyl-tRNA synthetase. The reaction takes place in the presence of glutamine and ATP through an activated gamma-phospho-Glu-tRNA(Gln). In Chlorobium limicola (strain DSM 245 / NBRC 103803 / 6330), this protein is Glutamyl-tRNA(Gln) amidotransferase subunit A.